The primary structure comprises 276 residues: Diaminopimelate epimerase (276 aa).

N13, Q46, and N66 together coordinate substrate. C75 (proton donor) is an active-site residue. Residues 76–77, N159, N192, and 210–211 each bind substrate; these read GN and ER. C219 acts as the Proton acceptor in catalysis. 220-221 provides a ligand contact to substrate; it reads GT.

This sequence belongs to the diaminopimelate epimerase family. Homodimer.

Its subcellular location is the cytoplasm. The catalysed reaction is (2S,6S)-2,6-diaminopimelate = meso-2,6-diaminopimelate. It functions in the pathway amino-acid biosynthesis; L-lysine biosynthesis via DAP pathway; DL-2,6-diaminopimelate from LL-2,6-diaminopimelate: step 1/1. Catalyzes the stereoinversion of LL-2,6-diaminopimelate (L,L-DAP) to meso-diaminopimelate (meso-DAP), a precursor of L-lysine and an essential component of the bacterial peptidoglycan. The chain is Diaminopimelate epimerase from Pseudomonas syringae pv. tomato (strain ATCC BAA-871 / DC3000).